The primary structure comprises 436 residues: tRNA modification GTPase MnmE (436 aa).

3 residues coordinate (6S)-5-formyl-5,6,7,8-tetrahydrofolate: Arg-20, Glu-77, and Lys-117. One can recognise a TrmE-type G domain in the interval 214–360 (GLKIVIAGAP…FIKELESFCL (147 aa)). GTP-binding positions include 224 to 229 (NSGKSS), 243 to 249 (MEEAGTT), and 268 to 271 (DTAG). Residues Ser-228 and Thr-249 each contribute to the Mg(2+) site. Residue Lys-436 participates in (6S)-5-formyl-5,6,7,8-tetrahydrofolate binding.

The protein belongs to the TRAFAC class TrmE-Era-EngA-EngB-Septin-like GTPase superfamily. TrmE GTPase family. In terms of assembly, homodimer. Heterotetramer of two MnmE and two MnmG subunits. It depends on K(+) as a cofactor.

Its subcellular location is the cytoplasm. Exhibits a very high intrinsic GTPase hydrolysis rate. Involved in the addition of a carboxymethylaminomethyl (cmnm) group at the wobble position (U34) of certain tRNAs, forming tRNA-cmnm(5)s(2)U34. This Bartonella quintana (strain Toulouse) (Rochalimaea quintana) protein is tRNA modification GTPase MnmE.